We begin with the raw amino-acid sequence, 452 residues long: MFIDRAKIYVKGGDGGNGIVAFRREKYVPDGGPSGGDGGKGGNVILEVDPGLKSLMDYKYNIHIKGKRGEHGQGSNQHGKSGQDKVIKVPPGTVVKEATSGKVLADLVHEHDSYIAAEGGRGGRGNTRFANPKNKAPRFSEDGKPGEEKWIVLELKVMAEVGLIGYPNVGKSTLLSQVTKASPKIDSYHFTTLNPNLGVVELEEGSRFVMADIPGLIEGAHQGRGLGDQFLRHIERTKMLIHVIDIASIEGRDPVLDIETINEELKGYNSRVMDKPQVIAANKMDLGDQAEENLQRLLDKVNSDEILIPEQYKKIFPISAATGEGLRELLDFVAEKVAQLPDTHDTFDIDLELPESEENTDTEQEALFTMSQDDKIEEKPKSDFGIRKEGDIFIVKHEKLEKILNEIDVHTEKGRHYFQAKVDEFGLEEALVDKGIKPGDTVKIGNVEFEYQ.

The region spanning 1 to 158 is the Obg domain; the sequence is MFIDRAKIYV…KWIVLELKVM (158 aa). 2 disordered regions span residues 66–87 and 117–143; these read GKRG…DKVI and AEGG…SEDG. In terms of domain architecture, OBG-type G spans 159-338; that stretch reads AEVGLIGYPN…LLDFVAEKVA (180 aa). Residues 165 to 172, 190 to 194, 212 to 215, 282 to 285, and 319 to 321 contribute to the GTP site; these read GYPNVGKS, FTTLN, DIPG, NKMD, and SAA. Mg(2+)-binding residues include S172 and T192. The region spanning 376-452 is the OCT domain; it reads IEEKPKSDFG…KIGNVEFEYQ (77 aa).

This sequence belongs to the TRAFAC class OBG-HflX-like GTPase superfamily. OBG GTPase family. Monomer. Requires Mg(2+) as cofactor.

The protein resides in the cytoplasm. Its function is as follows. An essential GTPase which binds GTP, GDP and possibly (p)ppGpp with moderate affinity, with high nucleotide exchange rates and a fairly low GTP hydrolysis rate. Plays a role in control of the cell cycle, stress response, ribosome biogenesis and in those bacteria that undergo differentiation, in morphogenesis control. This chain is GTPase Obg, found in Natranaerobius thermophilus (strain ATCC BAA-1301 / DSM 18059 / JW/NM-WN-LF).